The sequence spans 458 residues: GTPase Der (458 aa).

EngA-type G domains are found at residues Pro3–Glu167 and Ile176–Thr351. Residues Gly9–Ser16, Asp56–Phe60, Asn119–Asp122, Gly182–Ser189, Asp229–Leu233, and Asn294–Asp297 contribute to the GTP site. Residues Phe352–Pro436 form the KH-like domain.

It belongs to the TRAFAC class TrmE-Era-EngA-EngB-Septin-like GTPase superfamily. EngA (Der) GTPase family. Associates with the 50S ribosomal subunit.

GTPase that plays an essential role in the late steps of ribosome biogenesis. This is GTPase Der from Desulfosudis oleivorans (strain DSM 6200 / JCM 39069 / Hxd3) (Desulfococcus oleovorans).